A 424-amino-acid chain; its full sequence is Histidinol dehydrogenase (424 aa).

3 residues coordinate NAD(+): Tyr121, Gln183, and Asn206. 3 residues coordinate substrate: Ser229, Gln251, and His254. Zn(2+) is bound by residues Gln251 and His254. Active-site proton acceptor residues include Glu319 and His320. Positions 320, 353, 407, and 412 each coordinate substrate. Asp353 is a Zn(2+) binding site. Zn(2+) is bound at residue His412.

Belongs to the histidinol dehydrogenase family. It depends on Zn(2+) as a cofactor.

The enzyme catalyses L-histidinol + 2 NAD(+) + H2O = L-histidine + 2 NADH + 3 H(+). Its pathway is amino-acid biosynthesis; L-histidine biosynthesis; L-histidine from 5-phospho-alpha-D-ribose 1-diphosphate: step 9/9. Catalyzes the sequential NAD-dependent oxidations of L-histidinol to L-histidinaldehyde and then to L-histidine. This Geobacillus kaustophilus (strain HTA426) protein is Histidinol dehydrogenase.